Here is a 429-residue protein sequence, read N- to C-terminus: Tol-Pal system protein TolB (429 aa).

A signal peptide spans 1–21; that stretch reads MKPVFKMLLSLLILWTSLLHA.

The protein belongs to the TolB family. As to quaternary structure, the Tol-Pal system is composed of five core proteins: the inner membrane proteins TolA, TolQ and TolR, the periplasmic protein TolB and the outer membrane protein Pal. They form a network linking the inner and outer membranes and the peptidoglycan layer.

The protein resides in the periplasm. Functionally, part of the Tol-Pal system, which plays a role in outer membrane invagination during cell division and is important for maintaining outer membrane integrity. TolB occupies a key intermediary position in the Tol-Pal system because it communicates directly with both membrane-embedded components, Pal in the outer membrane and TolA in the inner membrane. The sequence is that of Tol-Pal system protein TolB from Hamiltonella defensa subsp. Acyrthosiphon pisum (strain 5AT).